Reading from the N-terminus, the 206-residue chain is Thymidylate kinase (206 aa).

Residue 11-18 coordinates ATP; the sequence is GIDGAGKT.

The protein belongs to the thymidylate kinase family.

It carries out the reaction dTMP + ATP = dTDP + ADP. Functionally, phosphorylation of dTMP to form dTDP in both de novo and salvage pathways of dTTP synthesis. This is Thymidylate kinase from Burkholderia vietnamiensis (strain G4 / LMG 22486) (Burkholderia cepacia (strain R1808)).